A 160-amino-acid polypeptide reads, in one-letter code: Cytochrome b6-f complex subunit 4 (160 aa).

The next 3 membrane-spanning stretches (helical) occupy residues 36–56 (LLYMFPVCILGTIACNVGLAV), 95–115 (LLGVLLMASVPVGLITVPFIE), and 131–151 (TIFLIGTVVAVWLGIGATLPI).

The protein belongs to the cytochrome b family. PetD subfamily. As to quaternary structure, the 4 large subunits of the cytochrome b6-f complex are cytochrome b6, subunit IV (17 kDa polypeptide, petD), cytochrome f and the Rieske protein, while the 4 small subunits are petG, petL, petM and petN. The complex functions as a dimer.

It is found in the plastid. Its subcellular location is the chloroplast thylakoid membrane. Functionally, component of the cytochrome b6-f complex, which mediates electron transfer between photosystem II (PSII) and photosystem I (PSI), cyclic electron flow around PSI, and state transitions. The polypeptide is Cytochrome b6-f complex subunit 4 (Staurastrum punctulatum (Green alga)).